Reading from the N-terminus, the 492-residue chain is Catalase (492 aa).

Residues histidine 65 and asparagine 138 contribute to the active site. A heme-binding site is contributed by tyrosine 348.

Belongs to the catalase family. Homotetramer. Heme is required as a cofactor.

Its subcellular location is the cytoplasm. The protein resides in the cytosol. It localises to the peroxisome matrix. The enzyme catalyses 2 H2O2 = O2 + 2 H2O. In terms of biological role, catalyzes the degradation of hydrogen peroxide (H(2)O(2)) generated by peroxisomal oxidases to water and oxygen, thereby protecting cells from the toxic effects of hydrogen peroxide. In Soldanella alpina (Alpine snowbell), this protein is Catalase.